Reading from the N-terminus, the 526-residue chain is Peptide chain release factor 3 (526 aa).

Residues 9–277 enclose the tr-type G domain; sequence DKRRTFAIIS…GIVEWAPKPL (269 aa). GTP is bound by residues 18 to 25, 86 to 90, and 140 to 143; these read SHPDAGKT, DTPGH, and NKLD.

This sequence belongs to the TRAFAC class translation factor GTPase superfamily. Classic translation factor GTPase family. PrfC subfamily.

The protein localises to the cytoplasm. Functionally, increases the formation of ribosomal termination complexes and stimulates activities of RF-1 and RF-2. It binds guanine nucleotides and has strong preference for UGA stop codons. It may interact directly with the ribosome. The stimulation of RF-1 and RF-2 is significantly reduced by GTP and GDP, but not by GMP. This chain is Peptide chain release factor 3, found in Shewanella baltica (strain OS223).